A 230-amino-acid chain; its full sequence is Cytochrome c oxidase subunit 2 (230 aa).

Residues 1–14 (MAYPLQLGFQDATS) lie on the Mitochondrial intermembrane side of the membrane. Residues 15-45 (PIMEELLHFHDHTLMIVFLISSLVLYIISTM) form a helical membrane-spanning segment. At 46–59 (LTTKLTHTNTMDAQ) the chain is on the mitochondrial matrix side. The helical transmembrane segment at 60–87 (EVETIWTILPAIILILIALPSLRILYMM) threads the bilayer. The Mitochondrial intermembrane segment spans residues 88–230 (DEINNPNLTI…NWTSSMMSTS (143 aa)). Cu cation is bound by residues His-161, Cys-196, Glu-198, Cys-200, His-204, and Met-207. Glu-198 is a Mg(2+) binding site. The residue at position 218 (Tyr-218) is a Phosphotyrosine.

Belongs to the cytochrome c oxidase subunit 2 family. As to quaternary structure, component of the cytochrome c oxidase (complex IV, CIV), a multisubunit enzyme composed of 14 subunits. The complex is composed of a catalytic core of 3 subunits MT-CO1, MT-CO2 and MT-CO3, encoded in the mitochondrial DNA, and 11 supernumerary subunits COX4I, COX5A, COX5B, COX6A, COX6B, COX6C, COX7A, COX7B, COX7C, COX8 and NDUFA4, which are encoded in the nuclear genome. The complex exists as a monomer or a dimer and forms supercomplexes (SCs) in the inner mitochondrial membrane with NADH-ubiquinone oxidoreductase (complex I, CI) and ubiquinol-cytochrome c oxidoreductase (cytochrome b-c1 complex, complex III, CIII), resulting in different assemblies (supercomplex SCI(1)III(2)IV(1) and megacomplex MCI(2)III(2)IV(2)). Found in a complex with TMEM177, COA6, COX18, COX20, SCO1 and SCO2. Interacts with TMEM177 in a COX20-dependent manner. Interacts with COX20. Interacts with COX16. It depends on Cu cation as a cofactor.

The protein resides in the mitochondrion inner membrane. It carries out the reaction 4 Fe(II)-[cytochrome c] + O2 + 8 H(+)(in) = 4 Fe(III)-[cytochrome c] + 2 H2O + 4 H(+)(out). In terms of biological role, component of the cytochrome c oxidase, the last enzyme in the mitochondrial electron transport chain which drives oxidative phosphorylation. The respiratory chain contains 3 multisubunit complexes succinate dehydrogenase (complex II, CII), ubiquinol-cytochrome c oxidoreductase (cytochrome b-c1 complex, complex III, CIII) and cytochrome c oxidase (complex IV, CIV), that cooperate to transfer electrons derived from NADH and succinate to molecular oxygen, creating an electrochemical gradient over the inner membrane that drives transmembrane transport and the ATP synthase. Cytochrome c oxidase is the component of the respiratory chain that catalyzes the reduction of oxygen to water. Electrons originating from reduced cytochrome c in the intermembrane space (IMS) are transferred via the dinuclear copper A center (CU(A)) of subunit 2 and heme A of subunit 1 to the active site in subunit 1, a binuclear center (BNC) formed by heme A3 and copper B (CU(B)). The BNC reduces molecular oxygen to 2 water molecules using 4 electrons from cytochrome c in the IMS and 4 protons from the mitochondrial matrix. The protein is Cytochrome c oxidase subunit 2 (MT-CO2) of Ornithorhynchus anatinus (Duckbill platypus).